The following is a 660-amino-acid chain: Acetyl-coenzyme A synthetase (660 aa).

Residues 197-200 (RGGK) and T317 each bind CoA. ATP contacts are provided by residues 397–399 (GEP), 421–426 (DTWWQT), D512, and R528. Position 536 (S536) interacts with CoA. Residue R539 participates in ATP binding. Mg(2+)-binding residues include V550, H552, and V555. K625 carries the N6-acetyllysine modification.

It belongs to the ATP-dependent AMP-binding enzyme family. It depends on Mg(2+) as a cofactor. Post-translationally, acetylated. Deacetylation by the SIR2-homolog deacetylase activates the enzyme.

It catalyses the reaction acetate + ATP + CoA = acetyl-CoA + AMP + diphosphate. Catalyzes the conversion of acetate into acetyl-CoA (AcCoA), an essential intermediate at the junction of anabolic and catabolic pathways. AcsA undergoes a two-step reaction. In the first half reaction, AcsA combines acetate with ATP to form acetyl-adenylate (AcAMP) intermediate. In the second half reaction, it can then transfer the acetyl group from AcAMP to the sulfhydryl group of CoA, forming the product AcCoA. The sequence is that of Acetyl-coenzyme A synthetase from Burkholderia lata (strain ATCC 17760 / DSM 23089 / LMG 22485 / NCIMB 9086 / R18194 / 383).